The chain runs to 868 residues: Alanine--tRNA ligase (868 aa).

Residues histidine 553, histidine 557, cysteine 657, and histidine 661 each coordinate Zn(2+). Residues glycine 831–leucine 851 are disordered.

The protein belongs to the class-II aminoacyl-tRNA synthetase family. Zn(2+) is required as a cofactor.

It localises to the cytoplasm. The enzyme catalyses tRNA(Ala) + L-alanine + ATP = L-alanyl-tRNA(Ala) + AMP + diphosphate. Its function is as follows. Catalyzes the attachment of alanine to tRNA(Ala) in a two-step reaction: alanine is first activated by ATP to form Ala-AMP and then transferred to the acceptor end of tRNA(Ala). Also edits incorrectly charged Ser-tRNA(Ala) and Gly-tRNA(Ala) via its editing domain. The sequence is that of Alanine--tRNA ligase from Chromohalobacter salexigens (strain ATCC BAA-138 / DSM 3043 / CIP 106854 / NCIMB 13768 / 1H11).